A 297-amino-acid polypeptide reads, in one-letter code: HTH-type transcriptional regulator PerR (297 aa).

One can recognise an HTH lysR-type domain in the interval 7–64 (APLNLLRAFEAAGRTGAFALAASELELSPSAISHAIRKLENLLDVRLFQRSTREITLT). Positions 24 to 44 (FALAASELELSPSAISHAIRK) form a DNA-binding region, H-T-H motif.

The protein belongs to the LysR transcriptional regulatory family.

Apparent regulatory gene involved in peroxide resistance in stationary phase. In Escherichia coli (strain K12), this protein is HTH-type transcriptional regulator PerR (perR).